The following is a 350-amino-acid chain: Protein FAM118B (350 aa).

Residue A2 is modified to N-acetylalanine. S9 bears the Phosphoserine mark.

It belongs to the FAM118 family.

It is found in the nucleus. The protein resides in the cajal body. May play a role in Cajal bodies formation. In Macaca fascicularis (Crab-eating macaque), this protein is Protein FAM118B (FAM118B).